The chain runs to 238 residues: uncharacterized protein (238 aa).

A helical membrane pass occupies residues 10-33; sequence TLLALMISLSLSSLLLLSISHFYV.

It is found in the membrane. This is an uncharacterized protein from Haemophilus influenzae (strain ATCC 51907 / DSM 11121 / KW20 / Rd).